Consider the following 212-residue polypeptide: Leucine efflux protein (212 aa).

The next 6 helical transmembrane spans lie at 12 to 32 (TYLVGAIFIVLVPGPNTLFVL), 49 to 69 (GVFIGDAVLMFLAWAGVATLI), 71 to 91 (TTPILFNIVRYLGAFYLLYLG), 122 to 142 (ILSLTNPKAILFYVSFFVQFI), 153 to 173 (FFILAATLELVSFCYLSFLII), and 188 to 208 (LAKVGNSLIGLMFVGFAARLA).

This sequence belongs to the Rht family.

The protein resides in the cell inner membrane. It carries out the reaction L-leucine(in) + H(+)(out) = L-leucine(out) + H(+)(in). Its activity is regulated as follows. Leucine export is inhibited by the proton ionophore carbonyl cyanide m-chlorophenylhydrazone (CCCP). Exporter of leucine. Can also transport its natural analog L-alpha-amino-n-butyric acid and some other structurally unrelated amino acids. Leucine excretion is probably driven by proton motive force. The sequence is that of Leucine efflux protein from Escherichia coli (strain K12).